The chain runs to 346 residues: Uroporphyrinogen decarboxylase (346 aa).

Substrate contacts are provided by residues 21–25, phenylalanine 40, aspartate 71, tyrosine 146, serine 201, and histidine 316; that span reads RQAGR.

Belongs to the uroporphyrinogen decarboxylase family. In terms of assembly, homodimer.

The protein localises to the cytoplasm. The catalysed reaction is uroporphyrinogen III + 4 H(+) = coproporphyrinogen III + 4 CO2. It participates in porphyrin-containing compound metabolism; protoporphyrin-IX biosynthesis; coproporphyrinogen-III from 5-aminolevulinate: step 4/4. Catalyzes the decarboxylation of four acetate groups of uroporphyrinogen-III to yield coproporphyrinogen-III. This Rickettsia conorii (strain ATCC VR-613 / Malish 7) protein is Uroporphyrinogen decarboxylase.